The sequence spans 236 residues: Coat protein (236 aa).

A disordered region spans residues 1–27 (MTTPANTTQAVGSTTSTTTTTAGATPA). Residues 7–27 (TTQAVGSTTSTTTTTAGATPA) are compositionally biased toward low complexity.

Belongs to the potexvirus capsid protein family.

It is found in the virion. Its function is as follows. Required for genome encapsidation. Forms ribonucleoprotein complexes along with TGB1 helicase and viral RNA. In Brassica campestris (Field mustard), this protein is Coat protein.